Consider the following 361-residue polypeptide: Hydroxymethylglutaryl-CoA synthase (361 aa).

Residue E92 is the Proton donor/acceptor of the active site. C124 acts as the Acyl-thioester intermediate in catalysis. Residues C124, S165, T214, and H247 each coordinate (3S)-3-hydroxy-3-methylglutaryl-CoA. H247 serves as the catalytic Proton donor/acceptor. K252 is a CoA binding site. (3S)-3-hydroxy-3-methylglutaryl-CoA contacts are provided by K256, N279, and S309.

Belongs to the thiolase-like superfamily. Archaeal HMG-CoA synthase family. In terms of assembly, interacts with acetoacetyl-CoA thiolase that catalyzes the precedent step in the pathway and with a DUF35 protein. The acetoacetyl-CoA thiolase/HMG-CoA synthase complex channels the intermediate via a fused CoA-binding site, which allows for efficient coupling of the endergonic thiolase reaction with the exergonic HMGCS reaction.

It carries out the reaction acetoacetyl-CoA + acetyl-CoA + H2O = (3S)-3-hydroxy-3-methylglutaryl-CoA + CoA + H(+). It participates in metabolic intermediate biosynthesis; (R)-mevalonate biosynthesis; (R)-mevalonate from acetyl-CoA: step 2/3. In terms of biological role, catalyzes the condensation of acetyl-CoA with acetoacetyl-CoA to form 3-hydroxy-3-methylglutaryl-CoA (HMG-CoA). Functions in the mevalonate (MVA) pathway leading to isopentenyl diphosphate (IPP), a key precursor for the biosynthesis of isoprenoid compounds that are building blocks of archaeal membrane lipids. The sequence is that of Hydroxymethylglutaryl-CoA synthase from Aeropyrum pernix (strain ATCC 700893 / DSM 11879 / JCM 9820 / NBRC 100138 / K1).